The following is a 321-amino-acid chain: MGELPLDINIQEPRWDQRTFLGRARHFFTVTDPRNLLLSGAQLEASRNIVQNYRAGIVTPGLTEDQLWRAKYVYDSAFHPDTGEKVVLIGRMSAQVPMNMTITGCMLIFYRKTPTVVFWQWLNQSFNAVVNYSNRSGDAPITVRQLGMAYVSATTGAVATALGLKSLTKHLPPLVGRFVPFAAVAAANCINIPLMRQRELQVGIPVTNEQGQRLGHSVAAAKKGIFQVVISRICMAIPAMAIPPVIMDTLEKKDFLKRRPWLGAPLQMGLVGFCLVFATPLCCALFPQRSSIHVSRLEPELRAQIQEQNPSIEVVYYNKGL.

Met1 carries the post-translational modification N-acetylmethionine. A run of 4 helical transmembrane segments spans residues 146–164, 174–194, 226–246, and 266–286; these read LGMA…ALGL, LVGR…NIPL, FQVV…PPVI, and LQMG…CALF.

Belongs to the sideroflexin family.

Its subcellular location is the mitochondrion membrane. It carries out the reaction L-serine(in) = L-serine(out). In terms of biological role, mitochondrial serine transporter that mediates transport of serine into mitochondria, an important step of the one-carbon metabolism pathway. Mitochondrial serine is converted to glycine and formate, which then exits to the cytosol where it is used to generate the charged folates that serve as one-carbon donors. The chain is Sideroflexin-3 (SFXN3) from Bos taurus (Bovine).